Consider the following 200-residue polypeptide: Small ribosomal subunit protein mS26 (200 aa).

A mitochondrion-targeting transit peptide spans 1 to 27 (MLRALNRLAARPETRPPTPLLLPVRGR). The disordered stretch occupies residues 1–44 (MLRALNRLAARPETRPPTPLLLPVRGRKTRHDPPAKSKVGRVQT). Lysine 159 is modified (N6-acetyllysine).

The protein belongs to the mitochondrion-specific ribosomal protein mS26 family. Component of the mitochondrial ribosome small subunit (28S) which comprises a 12S rRNA and about 30 distinct proteins.

The protein localises to the mitochondrion. This Mus musculus (Mouse) protein is Small ribosomal subunit protein mS26 (Mrps26).